Consider the following 261-residue polypeptide: Glucosamine-6-phosphate deaminase (261 aa).

Catalysis depends on aspartate 67, which acts as the Proton acceptor; for enolization step. Aspartate 136 acts as the For ring-opening step in catalysis. Catalysis depends on histidine 138, which acts as the Proton acceptor; for ring-opening step. The active-site For ring-opening step is glutamate 143.

The protein belongs to the glucosamine/galactosamine-6-phosphate isomerase family. NagB subfamily.

The enzyme catalyses alpha-D-glucosamine 6-phosphate + H2O = beta-D-fructose 6-phosphate + NH4(+). The protein operates within amino-sugar metabolism; N-acetylneuraminate degradation; D-fructose 6-phosphate from N-acetylneuraminate: step 5/5. Its function is as follows. Catalyzes the reversible isomerization-deamination of glucosamine 6-phosphate (GlcN6P) to form fructose 6-phosphate (Fru6P) and ammonium ion. The sequence is that of Glucosamine-6-phosphate deaminase from Beutenbergia cavernae (strain ATCC BAA-8 / DSM 12333 / CCUG 43141 / JCM 11478 / NBRC 16432 / NCIMB 13614 / HKI 0122).